The sequence spans 1078 residues: Rho family-interacting cell polarization regulator 2 (1078 aa).

2 positions are modified to phosphoserine: S46 and S62. The involved in cell filopodia formation stretch occupies residues 80 to 138; it reads MHNLGHKNNNTPKEPQPKRVEEVYRALKNGLDEYLEFHQTELDKLTAQLKDMKRNSRLG. Residues 108-137 are a coiled coil; it reads NGLDEYLEFHQTELDKLTAQLKDMKRNSRL. S366 is subject to Phosphoserine. A compositionally biased stretch (polar residues) spans 488–508; sequence SSLSSQNEGTEDSSSASSRNS. The interval 488–534 is disordered; the sequence is SSLSSQNEGTEDSSSASSRNSLGEDHEPKSHPKSDTVEPGKPGVATR. Positions 509 to 525 are enriched in basic and acidic residues; it reads LGEDHEPKSHPKSDTVE. The residue at position 582 (S582) is a Phosphoserine.

The protein belongs to the RIPOR family. Homooligomer; homooligomerization is regulated by RHOC and leads to the formation of concatemers through the association of N- and C-termini. Interacts (phosphorylated form) with 14-3-3 proteins; these interactions occur during myogenic cell differentiation and also induces T cell proliferation arrest. Interacts (phosphorylated form) with HDAC6; this interaction occurs during early myogenic differentiation, prevents HDAC6 to deacetylate tubulin and also induces T cell proliferation arrest. Interacts with DYSF; this interaction occurs during early myogenic differentiation. Interacts with MYOF. Interacts (via active GTP- or inactive GDP-bound forms) with RHOA; this interaction is direct, blocks the loading of GTP to RHOA and decreases upon chemokine CCL19 stimulation in primary T lymphocytes. Interacts with RHOC. Interacts (via phosphorylated form) with YWHAB; this interaction occurs in a chemokine-dependent manner and does not compete for binding of RIPOR2 with RHOA nor blocks inhibition of RIPOR2-mediated RHOA activity. Interacts with YWHAE. Interacts with YWHAQ. Phosphorylated. Chemokine-induced phosphorylation in neutrophils occurs in a PKC- and AKT-dependent manner, resulting in RIPOR2 interaction with YWHAB and stabilization. Phosphorylated by PKCA, AKT1 and MAPKAPK1A; in vitro. As to expression, expressed in the cochlea. Expressed in inner hair cells and outer hair cells and Hensen's cells (at protein level). Expressed in the brain, cerebellum, spinal cord, retina, heart, spleen liver, kidney, bladder, muscle and lung. Expressed in the cochlea of the inner ear.

It localises to the cytoplasm. It is found in the cytoskeleton. The protein localises to the cell projection. Its subcellular location is the filopodium. The protein resides in the stereocilium. It localises to the stereocilium membrane. It is found in the apical cell membrane. In terms of biological role, acts as an inhibitor of the small GTPase RHOA and plays several roles in the regulation of myoblast and hair cell differentiation, lymphocyte T proliferation and neutrophil polarization. Plays a role in fetal mononuclear myoblast differentiation by promoting filopodia and myotube formation. Maintains naive T lymphocytes in a quiescent state and prevents chemokine-induced T lymphocyte responses, such as cell adhesion, polarization and migration. Involved also in the regulation of neutrophil polarization, chemotaxis and adhesion. Required for normal development of inner and outer hair cell stereocilia within the cochlea of the inner ear. Plays a role for maintaining the structural organization of the basal domain of stereocilia. Involved in mechanosensory hair cell function. Required for normal hearing. This is Rho family-interacting cell polarization regulator 2 from Mus musculus (Mouse).